The sequence spans 376 residues: Lateral eye opsin (376 aa).

The Extracellular segment spans residues 1–46; that stretch reads MANQLSYSSLGWPYQPNASVVDTMPKEMLYMIHEHWYAFPPMNPLW. Residue Asn-17 is glycosylated (N-linked (GlcNAc...) asparagine). The helical transmembrane segment at 47–71 threads the bilayer; that stretch reads YSILGVAMIILGIICVLGNGMVIYL. At 72–83 the chain is on the cytoplasmic side; the sequence is MMTTKSLRTPTN. A helical membrane pass occupies residues 84 to 108; the sequence is LLVVNLAFSDFCMMAFMMPTMTSNC. At 109 to 123 the chain is on the extracellular side; sequence FAETWILGPFMCEVY. A disulfide bridge connects residues Cys-120 and Cys-197. The helical transmembrane segment at 124–143 threads the bilayer; sequence GMAGSLFGCASIWSMVMITL. At 144-162 the chain is on the cytoplasmic side; it reads DRYNVIVRGMAAAPLTHKK. Residues 163 to 186 traverse the membrane as a helical segment; the sequence is ATLLLLFVWIWSGGWTILPFFGWS. Residues 187 to 210 lie on the Extracellular side of the membrane; that stretch reads RYVPEGNLTSCTVDYLTKDWSSAS. Asn-193 is a glycosylation site (N-linked (GlcNAc...) asparagine). A helical membrane pass occupies residues 211 to 238; that stretch reads YVVIYGLAVYFLPLITMIYCYFFIVHAV. The Cytoplasmic portion of the chain corresponds to 239 to 274; sequence AEHEKQLREQAKKMNVASLRANADQQKQSAECRLAK. Residues 275-298 traverse the membrane as a helical segment; it reads VAMMTVGLWFMAWTPYLIISWAGV. Residues 299-306 lie on the Extracellular side of the membrane; that stretch reads FSSGTRLT. Residues 307–331 form a helical membrane-spanning segment; it reads PLATIWGSVFAKANSCYNPIVYGIS. Lys-318 is subject to N6-(retinylidene)lysine. Topologically, residues 332–376 are cytoplasmic; the sequence is HPRYKAALYQRFPSLACGSGESGSDVKSEASATTTMEEKPKIPEA. Residues 349-376 are disordered; sequence GSGESGSDVKSEASATTTMEEKPKIPEA. The segment covering 367–376 has biased composition (basic and acidic residues); the sequence is MEEKPKIPEA.

The protein belongs to the G-protein coupled receptor 1 family. Opsin subfamily. In terms of processing, phosphorylated on some or all of the serine and threonine residues present in the C-terminal region. As to expression, lateral eye.

Its subcellular location is the membrane. Visual pigments are the light-absorbing molecules that mediate vision. They consist of an apoprotein, opsin, covalently linked to cis-retinal. The polypeptide is Lateral eye opsin (Limulus polyphemus (Atlantic horseshoe crab)).